The sequence spans 101 residues: MKLTILILLVITSFCSCGILREKYAHKAIDVLTPMIGVPVVSKIVNNAAKQLVHKIAKNQQLCMFNKDVAGWCEKSCQQSAHQKGYCHGTKCKCGIPLNYK.

An N-terminal signal peptide occupies residues 1-17 (MKLTILILLVITSFCSC). The region spanning 60–100 (QQLCMFNKDVAGWCEKSCQQSAHQKGYCHGTKCKCGIPLNY) is the BetaSPN-type CS-alpha/beta domain. Intrachain disulfides connect cysteine 63/cysteine 87, cysteine 73/cysteine 92, and cysteine 77/cysteine 94.

Belongs to the long chain scorpion toxin family. Class 3 subfamily. In terms of tissue distribution, expressed by the venom gland.

The protein resides in the secreted. Inhibits voltage-gated potassium channels. In Hoffmannihadrurus gertschi (Scorpion), this protein is Hg-scorpine-like-2.